Consider the following 364-residue polypeptide: MEENKIRIGITQGDINGVGYEVILKTFSDPTMLELCTPIIYGSPKVAAYHRKALDVQANFSIVNTASEAGYNRLSVVNCTDDEVKVEFSKPDPEAGKAALGALERAIEEYREGLIDVIVTAPINKHTIQSEEFSFPGHTEYIEERLGNGNKSLMILMKNDFRVALVTTHIPVREIATTITKELIQEKLMIFHRCLKQDFGIGAPRIAVLSLNPHAGDGGLLGMEEQEIIIPAMKEMEEKGIICYGPYAADGFMGSGNYTHFDGILAMYHDQGLAPFKALAMEDGVNYTAGLPVVRTSPAHGTAYDIAGKGLASEDSFRQAIYVAIDVFRNRQREKAARVNPLRKQYYEKRDDSDKLKLDTVDED.

His138 and Thr139 together coordinate substrate. A divalent metal cation is bound by residues His169, His214, and His269. The substrate site is built by Lys277, Asn286, and Arg295.

The protein belongs to the PdxA family. As to quaternary structure, homodimer. A divalent metal cation is required as a cofactor.

Its subcellular location is the cytoplasm. The enzyme catalyses 4-(phosphooxy)-L-threonine + NAD(+) = 3-amino-2-oxopropyl phosphate + CO2 + NADH. It functions in the pathway cofactor biosynthesis; pyridoxine 5'-phosphate biosynthesis; pyridoxine 5'-phosphate from D-erythrose 4-phosphate: step 4/5. Its function is as follows. Catalyzes the NAD(P)-dependent oxidation of 4-(phosphooxy)-L-threonine (HTP) into 2-amino-3-oxo-4-(phosphooxy)butyric acid which spontaneously decarboxylates to form 3-amino-2-oxopropyl phosphate (AHAP). The polypeptide is 4-hydroxythreonine-4-phosphate dehydrogenase (Bacteroides thetaiotaomicron (strain ATCC 29148 / DSM 2079 / JCM 5827 / CCUG 10774 / NCTC 10582 / VPI-5482 / E50)).